The sequence spans 97 residues: Co-chaperonin GroES (97 aa).

This sequence belongs to the GroES chaperonin family. As to quaternary structure, heptamer of 7 subunits arranged in a ring. Interacts with the chaperonin GroEL.

The protein resides in the cytoplasm. In terms of biological role, together with the chaperonin GroEL, plays an essential role in assisting protein folding. The GroEL-GroES system forms a nano-cage that allows encapsulation of the non-native substrate proteins and provides a physical environment optimized to promote and accelerate protein folding. GroES binds to the apical surface of the GroEL ring, thereby capping the opening of the GroEL channel. The chain is Co-chaperonin GroES from Aeromonas salmonicida (strain A449).